We begin with the raw amino-acid sequence, 216 residues long: DegV domain-containing protein UU190 (216 aa).

In terms of domain architecture, DegV spans 1–215; that stretch reads MLWKNLDELF…LNNFAILIEA (215 aa). A hexadecanoate-binding site is contributed by Ser26.

Functionally, may bind long-chain fatty acids, such as palmitate, and may play a role in lipid transport or fatty acid metabolism. The polypeptide is DegV domain-containing protein UU190 (Ureaplasma parvum serovar 3 (strain ATCC 700970)).